A 638-amino-acid polypeptide reads, in one-letter code: Threonine--tRNA ligase (638 aa).

One can recognise a TGS domain in the interval 1–61 (MVAITLPDGK…DRDVNLSIIT (61 aa)). A catalytic region spans residues 244–536 (DHRRLGREME…LIENFAGRFP (293 aa)). The Zn(2+) site is built by Cys336, His387, and His513.

It belongs to the class-II aminoacyl-tRNA synthetase family. As to quaternary structure, homodimer. The cofactor is Zn(2+).

It is found in the cytoplasm. It carries out the reaction tRNA(Thr) + L-threonine + ATP = L-threonyl-tRNA(Thr) + AMP + diphosphate + H(+). Its function is as follows. Catalyzes the attachment of threonine to tRNA(Thr) in a two-step reaction: L-threonine is first activated by ATP to form Thr-AMP and then transferred to the acceptor end of tRNA(Thr). Also edits incorrectly charged L-seryl-tRNA(Thr). The protein is Threonine--tRNA ligase of Paramagnetospirillum magneticum (strain ATCC 700264 / AMB-1) (Magnetospirillum magneticum).